An 89-amino-acid chain; its full sequence is Small ribosomal subunit protein uS15 (89 aa).

It belongs to the universal ribosomal protein uS15 family. Part of the 30S ribosomal subunit. Forms a bridge to the 50S subunit in the 70S ribosome, contacting the 23S rRNA.

Functionally, one of the primary rRNA binding proteins, it binds directly to 16S rRNA where it helps nucleate assembly of the platform of the 30S subunit by binding and bridging several RNA helices of the 16S rRNA. Its function is as follows. Forms an intersubunit bridge (bridge B4) with the 23S rRNA of the 50S subunit in the ribosome. This Cupriavidus metallidurans (strain ATCC 43123 / DSM 2839 / NBRC 102507 / CH34) (Ralstonia metallidurans) protein is Small ribosomal subunit protein uS15.